The sequence spans 487 residues: MPSAFEKVVKNVIKEVSGSRGDLIPVDSLRNSTSFRPYCLLNRKFSSSRFWKPRYSCVNLSIKDILEPSAPEPEPECFGSFKVSDVVDGNIQGRVMLSGMGEGKISGGAAVSDSSSASMNVCILRVTQKTWETMQHERHLQQPENKILQQLRSRGDDLFVVTEVLQTKEEVQITEVHSQEGSGQFTLPGALCLKGEGKGHQSRKKMVTIPAGSILAFRVAQLLIGSKWDILLVSDEKQRTFEPSSGDRKAVGQRHHGLNVLAALCSIGKQLSLLSDGIDEEELIEAADFQGLYAEVKACSSELESLEMELRQQILVNIGKILQDQPSMEALEASLGQGLCSGGQVEPLDGPAGCILECLVLDSGELVPELAAPIFYLLGALAVLSETQQQLLAKALETTVLSKQLELVKHVLEQSTPWQEQSSVSLPTVLLGDCWDEKNPTWVLLEECGLRLQVESPQVHWEPTSLIPTSALYASLFLLSSLGQKPC.

Residue Tyr38 is modified to Phosphotyrosine. S-(2-succinyl)cysteine occurs at positions 39, 57, and 77. The next 2 membrane-spanning stretches (beta stranded) occupy residues 92 to 98 (QGRVMLS) and 104 to 109 (KISGGA). Residue Cys122 is modified to S-(2-succinyl)cysteine. Beta stranded transmembrane passes span 181–187 (GSGQFTL) and 192–198 (CLKGEGK). Cys192 and Cys265 each carry S-(2-succinyl)cysteine. Cys192 is lipidated: S-palmitoyl cysteine. Positions 278-298 (IDEEELIEAADFQGLYAEVKA) are linker helix loop. Residues Cys299, Cys434, and Cys487 each carry the S-(2-succinyl)cysteine modification.

It belongs to the gasdermin family. Homooligomer; homooligomeric ring-shaped pore complex containing 27-28 subunits when inserted in the membrane. Homooligomerization is promoted by the mTORC1 complex in macrophages. In response to a canonical inflammasome stimulus, such as nigericin, recruited to NLRP3 inflammasone with similar kinetics to that of uncleaved CASP1 precursor. Although this recruitment is also observed in the absence of PYCARD, it is more efficient in its presence. In terms of processing, cleavage at Asp-276 by CASP1 (mature and uncleaved precursor forms), CASP4/CASP11 or CASP8 relieves autoinhibition and is sufficient to initiate pyroptosis. Cleavage by CASP1 and CASP4/CASP11 is not strictly dependent on the consensus cleavage site on GSDMD but depends on an exosite interface on CASP1 that recognizes and binds the Gasdermin-D, C-terminal (GSDMD-CT) part. Cleavage by CASP8 takes place following inactivation of MAP3K7/TAK1 by Yersinia toxin YopJ. Cleavage at Asp-88 by CASP3 or CASP7 inactivates the ability to mediate pyroptosis, but generates the Gasdermin-D, p13 chain, which translocates to the nucleus and acts as a transcription regulator. Cleavage by papain allergen generates the Gasdermin-D, p40 chain. Post-translationally, palmitoylated at Cys-192 by ZDHHC5 and ZDHHC9 in response to microbial infection and danger signals. May also be palmitoylated by ZDHHC7. Palmitoylation takes place before cleavage by caspases (CASP1, CASP4, CASP5 or CASP8) and is required for membrane translocation and pore formation. Depalmitoylated by LYPLA2. Succination of Cys-192 by the Krebs cycle intermediate fumarate, which leads to S-(2-succinyl)cysteine residues, inhibits processing by caspases, and ability to initiate pyroptosis. Succination modification is catalyzed by a non-enzymatic reaction caused by an accumulation of fumarate. In terms of processing, glycosylated: O-GlcNAcylation by OGT leads to reduced cleavage by CASP4 and decreased LPS-induced endothelial cell pyroptosis. As to expression, highly expressed in brain endothelial cells.

It localises to the cytoplasm. The protein localises to the cytosol. The protein resides in the inflammasome. It is found in the cell membrane. Its subcellular location is the secreted. It localises to the mitochondrion membrane. The protein localises to the nucleus. The full-length protein before cleavage is inactive: intramolecular interactions between N- and C-terminal domains mediate autoinhibition in the absence of activation signal. The intrinsic pyroptosis-inducing activity is carried by the released N-terminal moiety (Gasdermin-D, N-terminal) following cleavage by inflammatory caspases CASP1, CASP4/CASP11 or CASP8. Cleavage at Asp-88 by CASP3 or CASP7 inactivates the ability to mediate pyroptosis. Pore formation is specifically inhibited by VHH(GSDMD-1) nanobody, protecting against excessive pyroptosis. Inhibited by small molecule NU6300, which covalently reacts with Cys-191, thereby preventing palmitoylation and pyroptosis. Functionally, precursor of a pore-forming protein that plays a key role in host defense against pathogen infection and danger signals. This form constitutes the precursor of the pore-forming protein: upon cleavage, the released N-terminal moiety (Gasdermin-D, N-terminal) binds to membranes and forms pores, triggering pyroptosis. Promotes pyroptosis in response to microbial infection and danger signals. Produced by the cleavage of gasdermin-D by inflammatory caspases CASP1 or CASP4/CASP11 in response to canonical, as well as non-canonical (such as cytosolic LPS) inflammasome activators. After cleavage, moves to the plasma membrane where it strongly binds to inner leaflet lipids, including monophosphorylated phosphatidylinositols, such as phosphatidylinositol 4-phosphate, bisphosphorylated phosphatidylinositols, such as phosphatidylinositol (4,5)-bisphosphate, as well as phosphatidylinositol (3,4,5)-bisphosphate, and more weakly to phosphatidic acid and phosphatidylserine. Homooligomerizes within the membrane and forms pores of 10-15 nanometers (nm) of inner diameter, allowing the release of mature interleukin-1 (IL1B and IL18) and triggering pyroptosis. Gasdermin pores also allow the release of mature caspase-7 (CASP7). In some, but not all, cells types, pyroptosis is followed by pyroptotic cell death, which is caused by downstream activation of ninjurin-1 (NINJ1), which mediates membrane rupture (cytolysis). Also forms pores in the mitochondrial membrane, resulting in release of mitochondrial DNA (mtDNA) into the cytosol. Gasdermin-D, N-terminal released from pyroptotic cells into the extracellular milieu rapidly binds to and kills both Gram-negative and Gram-positive bacteria, without harming neighboring mammalian cells, as it does not disrupt the plasma membrane from the outside due to lipid-binding specificity. Under cell culture conditions, also active against intracellular bacteria, such as Listeria monocytogenes. Also active in response to MAP3K7/TAK1 inactivation by Yersinia toxin YopJ, which triggers cleavage by CASP8 and subsequent activation. Required for mucosal tissue defense against enteric pathogens. Activation of the non-canonical inflammasome in brain endothelial cells can lead to excessive pyroptosis, leading to blood-brain barrier breakdown. Strongly binds to bacterial and mitochondrial lipids, including cardiolipin. Does not bind to unphosphorylated phosphatidylinositol, phosphatidylethanolamine nor phosphatidylcholine. Its function is as follows. Transcription coactivator produced by the cleavage by CASP3 or CASP7 in the upper small intestine in response to dietary antigens. Required to maintain food tolerance in small intestine: translocates to the nucleus and acts as a coactivator for STAT1 to induce the transcription of CIITA and MHC class II molecules, which in turn induce type 1 regulatory T (Tr1) cells in upper small intestine. In terms of biological role, produced by the cleavage by papain allergen. After cleavage, moves to the plasma membrane and homooligomerizes within the membrane and forms pores of 10-15 nanometers (nm) of inner diameter, allowing the specific release of mature interleukin-33 (IL33), promoting type 2 inflammatory immune response. The chain is Gasdermin-D from Mus musculus (Mouse).